The primary structure comprises 292 residues: tRNA-cytidine(32) 2-sulfurtransferase (292 aa).

A PP-loop motif motif is present at residues 53 to 58 (SGGKDS). Cys128, Cys131, and Cys219 together coordinate [4Fe-4S] cluster.

Belongs to the TtcA family. In terms of assembly, homodimer. The cofactor is Mg(2+). [4Fe-4S] cluster is required as a cofactor.

It is found in the cytoplasm. The catalysed reaction is cytidine(32) in tRNA + S-sulfanyl-L-cysteinyl-[cysteine desulfurase] + AH2 + ATP = 2-thiocytidine(32) in tRNA + L-cysteinyl-[cysteine desulfurase] + A + AMP + diphosphate + H(+). It participates in tRNA modification. Its function is as follows. Catalyzes the ATP-dependent 2-thiolation of cytidine in position 32 of tRNA, to form 2-thiocytidine (s(2)C32). The sulfur atoms are provided by the cysteine/cysteine desulfurase (IscS) system. This chain is tRNA-cytidine(32) 2-sulfurtransferase, found in Cereibacter sphaeroides (strain ATCC 17029 / ATH 2.4.9) (Rhodobacter sphaeroides).